A 475-amino-acid chain; its full sequence is Ribulose bisphosphate carboxylase large chain (475 aa).

Residues methionine 1–serine 2 constitute a propeptide that is removed on maturation. The residue at position 3 (proline 3) is an N-acetylproline. Position 14 is an N6,N6,N6-trimethyllysine (lysine 14). Asparagine 123 and threonine 173 together coordinate substrate. Lysine 175 acts as the Proton acceptor in catalysis. A substrate-binding site is contributed by lysine 177. Residues lysine 201, aspartate 203, and glutamate 204 each contribute to the Mg(2+) site. Position 201 is an N6-carboxylysine (lysine 201). Histidine 294 (proton acceptor) is an active-site residue. Residues arginine 295, histidine 327, and serine 379 each coordinate substrate.

It belongs to the RuBisCO large chain family. Type I subfamily. In terms of assembly, heterohexadecamer of 8 large chains and 8 small chains; disulfide-linked. The disulfide link is formed within the large subunit homodimers. It depends on Mg(2+) as a cofactor. In terms of processing, the disulfide bond which can form in the large chain dimeric partners within the hexadecamer appears to be associated with oxidative stress and protein turnover.

Its subcellular location is the plastid. It localises to the chloroplast. It catalyses the reaction 2 (2R)-3-phosphoglycerate + 2 H(+) = D-ribulose 1,5-bisphosphate + CO2 + H2O. The enzyme catalyses D-ribulose 1,5-bisphosphate + O2 = 2-phosphoglycolate + (2R)-3-phosphoglycerate + 2 H(+). RuBisCO catalyzes two reactions: the carboxylation of D-ribulose 1,5-bisphosphate, the primary event in carbon dioxide fixation, as well as the oxidative fragmentation of the pentose substrate in the photorespiration process. Both reactions occur simultaneously and in competition at the same active site. The protein is Ribulose bisphosphate carboxylase large chain of Mesostigma viride (Green alga).